The sequence spans 308 residues: MAAKPEQEPVYVRDLVKDYDDARQMLTQAGVSEAVLGTIDAEIKHIKTGSRPKTVPNTDGSGFMDLYNDTKVKLVSRCCLPVDQFPKYNFLGKLLGPGGSTMKQLQDETMTKISILGRGSMRDRNKEEELRNSGDVKYAHLNEQLHIEIISIASPAEAHARMAYALTEIKKYITPEEDPNYMMMAGHGAGPMMGMGGMMGGPGPMGPQGRGRGRGRGGFSGPDRTFDLLEKARMNTSETMDPGYGFDESYCGMGGGYEMPYNGNAGWTASPGRGAGAGARGARGGLDQSRGGGKFPSARGGRGRAAPY.

In terms of domain architecture, KH spans 83–118 (DQFPKYNFLGKLLGPGGSTMKQLQDETMTKISILGR). Composition is skewed to gly residues over residues 203–220 (GPMGPQGRGRGRGRGGFS) and 273–294 (RGAGAGARGARGGLDQSRGGGK). 2 disordered regions span residues 203–222 (GPMGPQGRGRGRGRGGFSGP) and 270–308 (SPGRGAGAGARGARGGLDQSRGGGKFPSARGGRGRAAPY).

In terms of processing, the arginines in the Gly-rich domain might be methylated.

This chain is Glycine-rich protein GRP33, found in Artemia salina (Brine shrimp).